Consider the following 441-residue polypeptide: Xylose isomerase 1 (441 aa).

Active-site residues include H105 and D108. Mg(2+)-binding residues include E236, E272, H275, D300, D311, D313, and D343.

It belongs to the xylose isomerase family. Homotetramer. Mg(2+) is required as a cofactor.

It is found in the cytoplasm. It carries out the reaction alpha-D-xylose = alpha-D-xylulofuranose. The chain is Xylose isomerase 1 (xylA1) from Xanthomonas axonopodis pv. citri (strain 306).